Here is a 299-residue protein sequence, read N- to C-terminus: Homeobox protein ceh-24 (299 aa).

The segment covering 1–35 has biased composition (basic and acidic residues); sequence MSEKETPSPVLDVKKEKNEETGIDEEKSSEDDCSK. Disordered stretches follow at residues 1-45 and 208-263; these read MSEK…NPSK and QEKE…SGVF. A DNA-binding region (homeobox) is located at residues 150-209; the sequence is RRKRRVLFSQAQVYELERRFKQAKYLTAPEREQLANSIRLTPTQVKIWFQNHRYKCKRQE. The span at 242–252 shows a compositional bias: acidic residues; sequence DDKDDEEEEES.

This sequence belongs to the NK-2 homeobox family. In terms of tissue distribution, expressed in the 8 vulval muscles, 8-10 ventral neurons in the head and in the most posterior pharyngeal muscle cell, m8. Expressed in SIA, SIB and SMB sublateral motor neurons, and in muscles of the pharynx and vulva.

The protein localises to the nucleus. In terms of biological role, probable transcriptional regulator that is required in neural development for the normal formation of sublateral cholinergic motor neuron processes. Plays a role in regulating the expression of acetylcholine transporter protein unc-17 in the sublateral processes. In particular, it is required in sublateral motor neurons for a left-right turning behavior that occurs during the lethargus phase of the normal sleep process called 'flipping'. During 'flipping' animals rotate 180 degrees about their longitudinal axis. The chain is Homeobox protein ceh-24 from Caenorhabditis elegans.